A 496-amino-acid polypeptide reads, in one-letter code: Flotillin-like protein 3 (496 aa).

Cys37 carries the S-palmitoyl cysteine lipid modification. Residues 301–328 (VVREAELQLEVERKNALRLTEKLKAEKL) are a coiled coil.

This sequence belongs to the band 7/mec-2 family. Flotillin subfamily. In terms of processing, may be palmitoylated.

The protein resides in the cell membrane. It is found in the membrane. The protein localises to the caveola. In terms of biological role, may act as a scaffolding protein within caveolar membranes, functionally participating in formation of caveolae or caveolae-like vesicles. This is Flotillin-like protein 3 (FLOT3) from Oryza sativa subsp. japonica (Rice).